Here is a 181-residue protein sequence, read N- to C-terminus: Lipoprotein signal peptidase (181 aa).

3 consecutive transmembrane segments (helical) span residues 25–45 (LFYKLTMIGFVGFIILLQVFI), 86–106 (LVYFLQGLLSVIALVFLVFMV), and 107–127 (KYSYIFWITTLAFGSLGNFFD). Catalysis depends on residues aspartate 138 and aspartate 153. A helical transmembrane segment spans residues 149–169 (FNFADCCITFGFIGLFFCFLI).

This sequence belongs to the peptidase A8 family.

The protein resides in the cell membrane. The enzyme catalyses Release of signal peptides from bacterial membrane prolipoproteins. Hydrolyzes -Xaa-Yaa-Zaa-|-(S,diacylglyceryl)Cys-, in which Xaa is hydrophobic (preferably Leu), and Yaa (Ala or Ser) and Zaa (Gly or Ala) have small, neutral side chains.. The protein operates within protein modification; lipoprotein biosynthesis (signal peptide cleavage). Functionally, this protein specifically catalyzes the removal of signal peptides from prolipoproteins. This chain is Lipoprotein signal peptidase, found in Mycoplasma genitalium (strain ATCC 33530 / DSM 19775 / NCTC 10195 / G37) (Mycoplasmoides genitalium).